Consider the following 517-residue polypeptide: Crotonobetaine/carnitine--CoA ligase (517 aa).

The protein belongs to the ATP-dependent AMP-binding enzyme family.

It catalyses the reaction 4-(trimethylamino)butanoate + ATP + CoA = 4-(trimethylamino)butanoyl-CoA + AMP + diphosphate. The catalysed reaction is crotonobetaine + ATP + CoA = crotonobetainyl-CoA + AMP + diphosphate. The enzyme catalyses (R)-carnitine + ATP + CoA = (R)-carnitinyl-CoA + AMP + diphosphate. It participates in amine and polyamine metabolism; carnitine metabolism. Catalyzes the transfer of CoA to carnitine, generating the initial carnitinyl-CoA needed for the CaiB reaction cycle. Also has activity toward crotonobetaine and gamma-butyrobetaine. The protein is Crotonobetaine/carnitine--CoA ligase of Salmonella typhi.